A 211-amino-acid chain; its full sequence is Probable cytokinin riboside 5'-monophosphate phosphoribohydrolase LOGL3 (211 aa).

Residues Glu84, 102–103, 119–125, and Thr131 contribute to the substrate site; these read RK and GYGTLEE.

This sequence belongs to the LOG family. In terms of tissue distribution, expressed in roots, leaves, stems, tiller buds, shoot apex, immature inflorescences and flowers.

It carries out the reaction N(6)-(dimethylallyl)adenosine 5'-phosphate + H2O = N(6)-dimethylallyladenine + D-ribose 5-phosphate. It catalyses the reaction 9-ribosyl-trans-zeatin 5'-phosphate + H2O = trans-zeatin + D-ribose 5-phosphate. In terms of biological role, cytokinin-activating enzyme working in the direct activation pathway. Phosphoribohydrolase that converts inactive cytokinin nucleotides to the biologically active free-base forms. This is Probable cytokinin riboside 5'-monophosphate phosphoribohydrolase LOGL3 (LOGL3) from Oryza sativa subsp. japonica (Rice).